Reading from the N-terminus, the 949-residue chain is AP-1 complex subunit beta-1 (949 aa).

Residue K318 is modified to N6-acetyllysine. Position 574 is a 3'-nitrotyrosine (Y574). The interval 592–623 is disordered; that stretch reads SLPPRTASSESTESPEAAPAGAPASDQPDVIP. The segment covering 594 to 616 has biased composition (low complexity); the sequence is PPRTASSESTESPEAAPAGAPAS.

This sequence belongs to the adaptor complexes large subunit family. As to quaternary structure, adaptor protein complex 1 (AP-1) is a heterotetramer composed of two large adaptins (gamma-type subunit AP1G1 and beta-type subunit AP1B1), a medium adaptin (mu-type subunit AP1M1 or AP1M2) and a small adaptin (sigma-type subunit AP1S1 or AP1S2 or AP1S3). Post-translationally, the N-terminus is blocked.

Its subcellular location is the golgi apparatus. It is found in the cytoplasmic vesicle. The protein localises to the clathrin-coated vesicle membrane. Its function is as follows. Subunit of clathrin-associated adaptor protein complex 1 that plays a role in protein sorting in the late-Golgi/trans-Golgi network (TGN) and/or endosomes. The AP complexes mediate both the recruitment of clathrin to membranes and the recognition of sorting signals within the cytosolic tails of transmembrane cargo molecules. This Rattus norvegicus (Rat) protein is AP-1 complex subunit beta-1 (Ap1b1).